The following is a 241-amino-acid chain: GDSL esterase/lipase At5g45920 (241 aa).

Ser-12 (nucleophile) is an active-site residue. Active-site residues include Asp-189 and His-192.

This sequence belongs to the 'GDSL' lipolytic enzyme family.

This is GDSL esterase/lipase At5g45920 from Arabidopsis thaliana (Mouse-ear cress).